We begin with the raw amino-acid sequence, 238 residues long: Ubiquinone biosynthesis O-methyltransferase (238 aa).

S-adenosyl-L-methionine is bound by residues Arg-39, Gly-59, Asp-80, and Met-124.

This sequence belongs to the methyltransferase superfamily. UbiG/COQ3 family.

The catalysed reaction is a 3-demethylubiquinol + S-adenosyl-L-methionine = a ubiquinol + S-adenosyl-L-homocysteine + H(+). It carries out the reaction a 3-(all-trans-polyprenyl)benzene-1,2-diol + S-adenosyl-L-methionine = a 2-methoxy-6-(all-trans-polyprenyl)phenol + S-adenosyl-L-homocysteine + H(+). It participates in cofactor biosynthesis; ubiquinone biosynthesis. Functionally, O-methyltransferase that catalyzes the 2 O-methylation steps in the ubiquinone biosynthetic pathway. The protein is Ubiquinone biosynthesis O-methyltransferase of Aeromonas salmonicida (strain A449).